Here is a 378-residue protein sequence, read N- to C-terminus: Probable dihydroorotase-like protein (378 aa).

The protein belongs to the metallo-dependent hydrolases superfamily. DHOase family. PyrC' subfamily.

In terms of biological role, non-functional DHOase. This chain is Probable dihydroorotase-like protein (pyrC'), found in Helicobacter pylori (strain J99 / ATCC 700824) (Campylobacter pylori J99).